An 875-amino-acid polypeptide reads, in one-letter code: Alanine--tRNA ligase (875 aa).

Residues His564, His568, Cys666, and His670 each coordinate Zn(2+).

Belongs to the class-II aminoacyl-tRNA synthetase family. In terms of assembly, homotetramer. Zn(2+) serves as cofactor.

The protein localises to the cytoplasm. It carries out the reaction tRNA(Ala) + L-alanine + ATP = L-alanyl-tRNA(Ala) + AMP + diphosphate. Catalyzes the attachment of alanine to tRNA(Ala) in a two-step reaction: alanine is first activated by ATP to form Ala-AMP and then transferred to the acceptor end of tRNA(Ala). Also edits incorrectly charged Ser-tRNA(Ala) and Gly-tRNA(Ala) via its editing domain. This Pectobacterium atrosepticum (strain SCRI 1043 / ATCC BAA-672) (Erwinia carotovora subsp. atroseptica) protein is Alanine--tRNA ligase.